Here is a 482-residue protein sequence, read N- to C-terminus: Anaerobic nitric oxide reductase flavorubredoxin (482 aa).

The interval 30 to 210 (LRGSSYNSYL…PFSRLVTPKI (181 aa)) is zinc metallo-hydrolase. 6 residues coordinate Fe cation: H79, E81, D83, H147, D166, and H227. Positions 254-393 (ITIFYDTMSN…LCRQHGRDIA (140 aa)) constitute a Flavodoxin-like domain. FMN is bound by residues 260–264 (TMSNN) and 342–369 (AFGS…EMSL). Positions 426-477 (GPSMQCSVCQWIYDPAKGEPLQDVAPGTPWSDVPDNFLCPECSLGKDVFDVL) constitute a Rubredoxin-like domain. C431, C434, C464, and C467 together coordinate Fe cation.

It in the N-terminal section; belongs to the zinc metallo-hydrolase group 3 family. Homotetramer. The cofactor is Fe cation. FMN is required as a cofactor.

Its subcellular location is the cytoplasm. It functions in the pathway nitrogen metabolism; nitric oxide reduction. Functionally, anaerobic nitric oxide reductase; uses NADH to detoxify nitric oxide (NO), protecting several 4Fe-4S NO-sensitive enzymes. Has at least 2 reductase partners, only one of which (NorW, flavorubredoxin reductase) has been identified. NO probably binds to the di-iron center; electrons enter from the NorW at rubredoxin and are transferred sequentially to the FMN center and the di-iron center. Also able to function as an aerobic oxygen reductase. In Citrobacter koseri (strain ATCC BAA-895 / CDC 4225-83 / SGSC4696), this protein is Anaerobic nitric oxide reductase flavorubredoxin.